A 423-amino-acid chain; its full sequence is Protein CLP1 homolog (423 aa).

ATP is bound by residues glutamate 16, lysine 57, and 119-124 (DVGKST).

Belongs to the Clp1 family. Clp1 subfamily.

The protein localises to the nucleus. Required for endonucleolytic cleavage during polyadenylation-dependent pre-mRNA 3'-end formation. The sequence is that of Protein CLP1 homolog (cbc) from Drosophila simulans (Fruit fly).